Reading from the N-terminus, the 376-residue chain is Alanine racemase (376 aa).

The active-site Proton acceptor; specific for D-alanine is lysine 44. An N6-(pyridoxal phosphate)lysine modification is found at lysine 44. Substrate is bound at residue arginine 139. Residue tyrosine 271 is the Proton acceptor; specific for L-alanine of the active site. Residue methionine 319 participates in substrate binding.

The protein belongs to the alanine racemase family. The cofactor is pyridoxal 5'-phosphate.

It catalyses the reaction L-alanine = D-alanine. It functions in the pathway amino-acid biosynthesis; D-alanine biosynthesis; D-alanine from L-alanine: step 1/1. Functionally, catalyzes the interconversion of L-alanine and D-alanine. May also act on other amino acids. The sequence is that of Alanine racemase (alr) from Bordetella petrii (strain ATCC BAA-461 / DSM 12804 / CCUG 43448).